The following is a 602-amino-acid chain: Elongation factor 4 (602 aa).

In terms of domain architecture, tr-type G spans 7 to 189 (KYIRNFSIVA…AIVNKVPAPD (183 aa)). Residues 19–24 (DHGKST) and 136–139 (NKID) each bind GTP.

It belongs to the TRAFAC class translation factor GTPase superfamily. Classic translation factor GTPase family. LepA subfamily.

It is found in the cell membrane. It catalyses the reaction GTP + H2O = GDP + phosphate + H(+). Its function is as follows. Required for accurate and efficient protein synthesis under certain stress conditions. May act as a fidelity factor of the translation reaction, by catalyzing a one-codon backward translocation of tRNAs on improperly translocated ribosomes. Back-translocation proceeds from a post-translocation (POST) complex to a pre-translocation (PRE) complex, thus giving elongation factor G a second chance to translocate the tRNAs correctly. Binds to ribosomes in a GTP-dependent manner. The polypeptide is Elongation factor 4 (Clostridium botulinum (strain ATCC 19397 / Type A)).